Reading from the N-terminus, the 145-residue chain is CBS domain-containing protein DDB_G0289609 (145 aa).

CBS domains follow at residues 9 to 66 (MSKS…FLPE) and 84 to 141 (MKQN…LEPV).

This is CBS domain-containing protein DDB_G0289609 from Dictyostelium discoideum (Social amoeba).